The following is a 142-amino-acid chain: Small ribosomal subunit protein uS12 (142 aa).

The disordered stretch occupies residues 1-30; that stretch reads MGKTRGMGAARKLKNHRRRQRWADKSYKKS. A compositionally biased stretch (basic residues) spans 11–20; the sequence is RKLKNHRRRQ. Residues 21–30 are compositionally biased toward basic and acidic residues; sequence RWADKSYKKS. Pro61 carries the post-translational modification Hydroxyproline.

Belongs to the universal ribosomal protein uS12 family.

The polypeptide is Small ribosomal subunit protein uS12 (RPS23) (Fragaria ananassa (Strawberry)).